The following is a 295-amino-acid chain: 2-dehydropantoate 2-reductase (295 aa).

NADP(+) is bound by residues 9-14 (GPGAVG), asparagine 100, and alanine 126. Asparagine 100 is a binding site for substrate. Residue lysine 177 is the Proton donor of the active site. Asparagine 181 and serine 246 together coordinate substrate. Glutamate 258 provides a ligand contact to NADP(+).

It belongs to the ketopantoate reductase family.

It is found in the cytoplasm. It carries out the reaction (R)-pantoate + NADP(+) = 2-dehydropantoate + NADPH + H(+). The protein operates within cofactor biosynthesis; (R)-pantothenate biosynthesis; (R)-pantoate from 3-methyl-2-oxobutanoate: step 2/2. Catalyzes the NADPH-dependent reduction of ketopantoate into pantoic acid. This is 2-dehydropantoate 2-reductase from Mycobacterium tuberculosis (strain CDC 1551 / Oshkosh).